The sequence spans 210 residues: HTH-type transcriptional repressor FabR (210 aa).

The region spanning 10 to 70 (KTRRSLVEAA…TMVDESGLML (61 aa)) is the HTH tetR-type domain. The segment at residues 33–52 (SLREVAREAGIAPTSFYRHF) is a DNA-binding region (H-T-H motif).

Homodimer.

It localises to the cytoplasm. Functionally, represses the transcription of fabB, involved in unsaturated fatty acid (UFA) biosynthesis. By controlling UFA production, FabR directly influences the physical properties of the membrane bilayer. The protein is HTH-type transcriptional repressor FabR of Salmonella paratyphi A (strain ATCC 9150 / SARB42).